The sequence spans 196 residues: Putative 3-methyladenine DNA glycosylase (196 aa).

Belongs to the DNA glycosylase MPG family.

This chain is Putative 3-methyladenine DNA glycosylase, found in Chlorobium luteolum (strain DSM 273 / BCRC 81028 / 2530) (Pelodictyon luteolum).